A 360-amino-acid polypeptide reads, in one-letter code: Phospho-N-acetylmuramoyl-pentapeptide-transferase (360 aa).

Transmembrane regions (helical) follow at residues 25 to 45 (RAIL…PWVI), 74 to 94 (MGGA…SDFG), 97 to 117 (YVWV…VDDY), 134 to 154 (YFWQ…TAQA), 168 to 188 (VALN…VGTS), 199 to 219 (GLAI…AYLA), 236 to 256 (AGEL…FLWF), 263 to 283 (VFMG…VAVI), 288 to 308 (FVLF…ILQV), and 339 to 359 (IVRF…TLKF).

The protein belongs to the glycosyltransferase 4 family. MraY subfamily. It depends on Mg(2+) as a cofactor.

It is found in the cell inner membrane. The catalysed reaction is UDP-N-acetyl-alpha-D-muramoyl-L-alanyl-gamma-D-glutamyl-meso-2,6-diaminopimeloyl-D-alanyl-D-alanine + di-trans,octa-cis-undecaprenyl phosphate = di-trans,octa-cis-undecaprenyl diphospho-N-acetyl-alpha-D-muramoyl-L-alanyl-D-glutamyl-meso-2,6-diaminopimeloyl-D-alanyl-D-alanine + UMP. It participates in cell wall biogenesis; peptidoglycan biosynthesis. Catalyzes the initial step of the lipid cycle reactions in the biosynthesis of the cell wall peptidoglycan: transfers peptidoglycan precursor phospho-MurNAc-pentapeptide from UDP-MurNAc-pentapeptide onto the lipid carrier undecaprenyl phosphate, yielding undecaprenyl-pyrophosphoryl-MurNAc-pentapeptide, known as lipid I. The chain is Phospho-N-acetylmuramoyl-pentapeptide-transferase from Cellvibrio japonicus (strain Ueda107) (Pseudomonas fluorescens subsp. cellulosa).